The chain runs to 477 residues: Probable cytosolic Fe-S cluster assembly factor GK14772 (477 aa).

[4Fe-4S] cluster contacts are provided by cysteine 23, cysteine 69, cysteine 72, cysteine 75, cysteine 188, cysteine 244, cysteine 396, and cysteine 400.

It belongs to the NARF family.

Functionally, component of the cytosolic iron-sulfur (Fe/S) protein assembly machinery. Required for maturation of extramitochondrial Fe/S proteins. The protein is Probable cytosolic Fe-S cluster assembly factor GK14772 of Drosophila willistoni (Fruit fly).